Consider the following 93-residue polypeptide: Acyl carrier protein AcpXL (93 aa).

Residues 2 to 88 (STTFDKVAKI…NLCAKIDALV (87 aa)) enclose the Carrier domain. The residue at position 37 (Ser37) is an O-(pantetheine 4'-phosphoryl)serine.

In terms of processing, 4'-phosphopantetheine is transferred from CoA to a specific serine of apo-ACP by AcpS. This modification is essential for activity because fatty acids are bound in thioester linkage to the sulfhydryl of the prosthetic group.

It localises to the cytoplasm. The protein operates within glycolipid biosynthesis; KDO(2)-lipid A biosynthesis. In terms of biological role, carrier of the growing fatty acid chain in fatty acid biosynthesis. Is involved in the transfer of long hydroxylated fatty acids to lipid A. The sequence is that of Acyl carrier protein AcpXL (acpXL) from Mesorhizobium japonicum (strain LMG 29417 / CECT 9101 / MAFF 303099) (Mesorhizobium loti (strain MAFF 303099)).